The chain runs to 197 residues: Putative methyltransferase Mtx subunit A (197 aa).

The protein belongs to the MtrA family. May be part of a complex composed of 3 subunits; MtxA, MtxH and MtxX.

In Methanosarcina acetivorans (strain ATCC 35395 / DSM 2834 / JCM 12185 / C2A), this protein is Putative methyltransferase Mtx subunit A (mtxA).